We begin with the raw amino-acid sequence, 303 residues long: UDP-3-O-acyl-N-acetylglucosamine deacetylase (303 aa).

Zn(2+) is bound by residues His78, His237, and Asp241. The Proton donor role is filled by His264.

This sequence belongs to the LpxC family. It depends on Zn(2+) as a cofactor.

The enzyme catalyses a UDP-3-O-[(3R)-3-hydroxyacyl]-N-acetyl-alpha-D-glucosamine + H2O = a UDP-3-O-[(3R)-3-hydroxyacyl]-alpha-D-glucosamine + acetate. Its pathway is glycolipid biosynthesis; lipid IV(A) biosynthesis; lipid IV(A) from (3R)-3-hydroxytetradecanoyl-[acyl-carrier-protein] and UDP-N-acetyl-alpha-D-glucosamine: step 2/6. In terms of biological role, catalyzes the hydrolysis of UDP-3-O-myristoyl-N-acetylglucosamine to form UDP-3-O-myristoylglucosamine and acetate, the committed step in lipid A biosynthesis. The polypeptide is UDP-3-O-acyl-N-acetylglucosamine deacetylase (Saccharophagus degradans (strain 2-40 / ATCC 43961 / DSM 17024)).